Here is a 298-residue protein sequence, read N- to C-terminus: Ethanolamine ammonia-lyase small subunit (298 aa).

Adenosylcob(III)alamin is bound by residues Val-210, Glu-231, and Cys-261.

The protein belongs to the EutC family. As to quaternary structure, the basic unit is a heterodimer which dimerizes to form tetramers. The heterotetramers trimerize; 6 large subunits form a core ring with 6 small subunits projecting outwards. It depends on adenosylcob(III)alamin as a cofactor.

The protein resides in the bacterial microcompartment. The enzyme catalyses ethanolamine = acetaldehyde + NH4(+). It participates in amine and polyamine degradation; ethanolamine degradation. Functionally, catalyzes the deamination of various vicinal amino-alcohols to oxo compounds. Allows this organism to utilize ethanolamine as the sole source of nitrogen and carbon in the presence of external vitamin B12. This chain is Ethanolamine ammonia-lyase small subunit, found in Salmonella dublin (strain CT_02021853).